Reading from the N-terminus, the 487-residue chain is MNLLVLSVILAIIIYLIFKRNYKYSPSKINSKIPGPIGLPIFGNILSLDNKNGIHTTFQKWFKIYGPIYSVNMGNKSAVVLTGFPIIKKAFIDNSEAFAPHYTFESRYKLNKCSDITQENGKNQSALKRIFLSELTVTRIKKQESHIQNEIVKLMKVLDKHSEDGKPFLLNNYFSMFSINIISRFLFGIDFPYQDFEETSDLMVGIRDLLIASGEIVLSDFLPIPHSKRSKLYTSYQALVVQIETLVKSHKYKEDDECMLSKLMIEHDKGNIPWDAVISNCNTIITAGSDSTSSTALFFLIEMMNNPTIQTKVYNDIVVSFEQNQQADDYMNESMVILKYSKYRSLIPYLSLALKENYRKHPAAPFGAPHETTQETVIEGYTIAKGTMIFQNIYATQRSDTFYSQPDEFIPERWNGDENSQTLISFGTGIRDCIGKSLAYNEIFTIIASVLNRYEFINPNPSIPFDDNGIPGLTTQCKNTVVQIKKR.

Residues 1-18 (MNLLVLSVILAIIIYLIF) form a helical membrane-spanning segment. Cys-433 contributes to the heme binding site.

Belongs to the cytochrome P450 family. It depends on heme as a cofactor.

It localises to the membrane. The chain is Probable cytochrome P450 513B1 (cyp513B1) from Dictyostelium discoideum (Social amoeba).